A 504-amino-acid polypeptide reads, in one-letter code: Maturase K (504 aa).

It belongs to the intron maturase 2 family. MatK subfamily.

The protein resides in the plastid. It localises to the chloroplast. Functionally, usually encoded in the trnK tRNA gene intron. Probably assists in splicing its own and other chloroplast group II introns. The chain is Maturase K from Lobularia maritima (Sweet alyssum).